Consider the following 435-residue polypeptide: T-box transcription factor T (435 aa).

The segment at residues 51–219 is a DNA-binding region (T-box); the sequence is LWLRFKELTN…YNPFAKAFLD (169 aa). Positions 279–308 are disordered; that stretch reads YPTLRSHRSSPYPSPYAHRNNSPTYSDNSP. Residues 297–308 are compositionally biased toward polar residues; that stretch reads RNNSPTYSDNSP.

In terms of assembly, monomer. In terms of tissue distribution, detected in testis, but not in other, normal tissues. Detected in lung tumors (at protein level).

The protein resides in the nucleus. Its function is as follows. Involved in the transcriptional regulation of genes required for mesoderm formation and differentiation. Binds to a palindromic T site 5'-TTCACACCTAGGTGTGAA-3' DNA sequence and activates gene transcription when bound to such a site. The chain is T-box transcription factor T from Homo sapiens (Human).